The following is a 237-amino-acid chain: Pyridoxine 5'-phosphate synthase (237 aa).

2 residues coordinate 3-amino-2-oxopropyl phosphate: Asn7 and Arg18. His43 functions as the Proton acceptor in the catalytic mechanism. Positions 45 and 50 each coordinate 1-deoxy-D-xylulose 5-phosphate. The Proton acceptor role is filled by Glu70. Residue Thr100 coordinates 1-deoxy-D-xylulose 5-phosphate. His190 acts as the Proton donor in catalysis. 3-amino-2-oxopropyl phosphate-binding positions include Asp191 and 213 to 214 (GH).

This sequence belongs to the PNP synthase family. As to quaternary structure, homooctamer; tetramer of dimers.

The protein resides in the cytoplasm. The enzyme catalyses 3-amino-2-oxopropyl phosphate + 1-deoxy-D-xylulose 5-phosphate = pyridoxine 5'-phosphate + phosphate + 2 H2O + H(+). It participates in cofactor biosynthesis; pyridoxine 5'-phosphate biosynthesis; pyridoxine 5'-phosphate from D-erythrose 4-phosphate: step 5/5. Catalyzes the complicated ring closure reaction between the two acyclic compounds 1-deoxy-D-xylulose-5-phosphate (DXP) and 3-amino-2-oxopropyl phosphate (1-amino-acetone-3-phosphate or AAP) to form pyridoxine 5'-phosphate (PNP) and inorganic phosphate. The protein is Pyridoxine 5'-phosphate synthase of Bacteroides thetaiotaomicron (strain ATCC 29148 / DSM 2079 / JCM 5827 / CCUG 10774 / NCTC 10582 / VPI-5482 / E50).